The following is a 484-amino-acid chain: tRNA sulfurtransferase (484 aa).

The THUMP domain maps to 61 to 165 (ILLVELLGRI…NDKMMLIKAR (105 aa)). ATP contacts are provided by residues 183–184 (LI), Lys-265, Gly-287, and Gln-296. A disulfide bond links Cys-344 and Cys-456. The region spanning 404-484 (LSANDVILDI…DNVKVLNKIS (81 aa)) is the Rhodanese domain. The Cysteine persulfide intermediate role is filled by Cys-456.

Belongs to the ThiI family.

The protein resides in the cytoplasm. It catalyses the reaction [ThiI sulfur-carrier protein]-S-sulfanyl-L-cysteine + a uridine in tRNA + 2 reduced [2Fe-2S]-[ferredoxin] + ATP + H(+) = [ThiI sulfur-carrier protein]-L-cysteine + a 4-thiouridine in tRNA + 2 oxidized [2Fe-2S]-[ferredoxin] + AMP + diphosphate. The enzyme catalyses [ThiS sulfur-carrier protein]-C-terminal Gly-Gly-AMP + S-sulfanyl-L-cysteinyl-[cysteine desulfurase] + AH2 = [ThiS sulfur-carrier protein]-C-terminal-Gly-aminoethanethioate + L-cysteinyl-[cysteine desulfurase] + A + AMP + 2 H(+). The protein operates within cofactor biosynthesis; thiamine diphosphate biosynthesis. Functionally, catalyzes the ATP-dependent transfer of a sulfur to tRNA to produce 4-thiouridine in position 8 of tRNAs, which functions as a near-UV photosensor. Also catalyzes the transfer of sulfur to the sulfur carrier protein ThiS, forming ThiS-thiocarboxylate. This is a step in the synthesis of thiazole, in the thiamine biosynthesis pathway. The sulfur is donated as persulfide by IscS. This chain is tRNA sulfurtransferase, found in Histophilus somni (strain 129Pt) (Haemophilus somnus).